The chain runs to 150 residues: Large ribosomal subunit protein uL15 (150 aa).

The tract at residues 18 to 43 (IVGRGSSSGWGKTSGKGHKGQQARSG) is disordered.

This sequence belongs to the universal ribosomal protein uL15 family. Part of the 50S ribosomal subunit.

Functionally, binds to the 23S rRNA. The protein is Large ribosomal subunit protein uL15 of Treponema denticola (strain ATCC 35405 / DSM 14222 / CIP 103919 / JCM 8153 / KCTC 15104).